An 839-amino-acid chain; its full sequence is Toll-like receptor 4 (839 aa).

An N-terminal signal peptide occupies residues M1–P23. Topologically, residues E24 to K631 are extracellular. The cysteines at positions 29 and 40 are disulfide-linked. An N-linked (GlcNAc...) asparagine glycan is attached at N35. LRR repeat units follow at residues S55–S76, E79–S100, H103–G124, S127–H148, and T151–S172. Residue N173 is glycosylated (N-linked (GlcNAc...) asparagine). LRR repeat units follow at residues N176–H199, N205–E225, and R227–I247. N-linked (GlcNAc...) asparagine glycosylation is present at N205. C281 and C306 are disulfide-bonded. Residues N282 and N309 are each glycosylated (N-linked (GlcNAc...) asparagine). LRR repeat units follow at residues G331 to K351, S352 to P373, S374 to S394, S400 to E422, Q423 to L444, N448 to H456, S472 to L495, N497 to S518, S521 to C542, and S545 to Q565. A disulfide bridge connects residues C390 and C391. Residues N497 and N526 are each glycosylated (N-linked (GlcNAc...) asparagine). Residue N575 is glycosylated (N-linked (GlcNAc...) asparagine). An LRRCT domain is found at N579–M629. Cystine bridges form between C583-C609 and C585-C627. N-linked (GlcNAc...) asparagine glycosylation is found at N624 and N630. Residues T632–Y652 traverse the membrane as a helical segment. At K653–I839 the chain is on the cytoplasmic side. Residues N672 to L815 form the TIR domain.

The protein belongs to the Toll-like receptor family. As to quaternary structure, belongs to the lipopolysaccharide (LPS) receptor, a multi-protein complex containing at least CD14, LY96 and TLR4. Binding to bacterial LPS leads to homodimerization. Interacts with LY96 via the extracellular domain. Interacts with MYD88 and TIRAP via their respective TIR domains. Interacts with NOX4. Interacts with CNPY3 and HSP90B1; this interaction is required for proper folding in the endoplasmic reticulum. Interacts with MAP3K21; this interaction leads to negative regulation of TLR4 signaling. Interacts with CD36, following CD36 stimulation by oxLDL or amyloid-beta 42, and forms a heterodimer with TLR6. The trimeric complex is internalized and triggers inflammatory response. LYN kinase activity facilitates TLR4-TLR6 heterodimerization and signal initiation. Interacts with TICAM1 in response to LPS in a WDFY1-dependent manner. Interacts with WDFY1 in response to LPS. Interacts with SMPDL3B. Interacts with CEACAM1; upon lipopolysaccharide stimulation, forms a complex including TLR4 and the phosphorylated form of SYK and CEACAM1, which in turn, recruits PTPN6 that dephosphorylates SYK, reducing the production of reactive oxygen species (ROS) and lysosome disruption, which in turn, reduces the activity of the inflammasome. Interacts with RFTN1; the interaction occurs in response to lipopolysaccharide stimulation. Interacts with SCIMP; the interaction occurs in response to lipopolysaccharide stimulation and is enhanced by phosphorylation of SCIMP by LYN. This interaction facilitates the phosphorylation of TLR4 by LYN which elicits a selective cytokine response in macrophages. Interacts with TRAF3IP3. Interacts with TREM1; this interaction enhances TLR4-mediated inflammatory response. Interacts with ZG16B/PAUF. Interacts with CD82; this interaction inhibits TLR4-mediated signaling pathway. In terms of processing, phosphorylated on tyrosine residues by LYN after binding lipopolysaccharide. Ubiquitinated by RNF128 via 'Lys-28'-linked polyubiquitin chains, leading to proteasomal degradation.

It is found in the cell membrane. The protein resides in the early endosome. The protein localises to the cell projection. Its subcellular location is the ruffle. Transmembrane receptor that functions as a pattern recognition receptor recognizing pathogen- and damage-associated molecular patterns (PAMPs and DAMPs) to induce innate immune responses via downstream signaling pathways. At the plasma membrane, cooperates with LY96 to mediate the innate immune response to bacterial lipopolysaccharide (LPS). Also involved in LPS-independent inflammatory responses triggered by free fatty acids, such as palmitate, and Ni(2+). Mechanistically, acts via MYD88, TIRAP and TRAF6, leading to NF-kappa-B activation, cytokine secretion and the inflammatory response. Alternatively, CD14-mediated TLR4 internalization via endocytosis is associated with the initiation of a MYD88-independent signaling via the TICAM1-TBK1-IRF3 axis leading to type I interferon production. In addition to the secretion of proinflammatory cytokines, initiates the activation of NLRP3 inflammasome and formation of a positive feedback loop between autophagy and NF-kappa-B signaling cascade. In complex with TLR6, promotes inflammation in monocytes/macrophages by associating with TLR6 and the receptor CD86. Upon ligand binding, such as oxLDL or amyloid-beta 42, the TLR4:TLR6 complex is internalized and triggers inflammatory response, leading to NF-kappa-B-dependent production of CXCL1, CXCL2 and CCL9 cytokines, via MYD88 signaling pathway, and CCL5 cytokine, via TICAM1 signaling pathway. In myeloid dendritic cells, vesicular stomatitis virus glycoprotein G but not LPS promotes the activation of IRF7, leading to type I IFN production in a CD14-dependent manner. The chain is Toll-like receptor 4 (TLR4) from Pan paniscus (Pygmy chimpanzee).